Reading from the N-terminus, the 714-residue chain is Calpain-1 catalytic subunit (714 aa).

The region spanning 55–354 is the Calpain catalytic domain; sequence LFRDEAFPPV…FTRLEICNLT (300 aa). Q109 and D114 together coordinate Ca(2+). Active-site residues include C115, H272, and N296. The Ca(2+) site is built by N316, D318, and D323. Phosphothreonine is present on T354. The segment at 355-526 is domain III; it reads PDALKSRTIR…KSAGTAELDD (172 aa). The segment at 527–542 is linker; the sequence is QIQANLPDEQVLSEEE. 4 consecutive EF-hand domains span residues 541 to 576, 585 to 618, 615 to 650, and 680 to 714; these read EEID…IISK, FSLE…NRIR, NRIR…AGFK, and VRLE…TMFA. Residues 543 to 713 form a domain IV region; it reads IDENFKALFR…LFKWLQLTMF (171 aa). D598, D600, N602, K604, E609, D628, D630, S632, S634, and E639 together coordinate Ca(2+).

This sequence belongs to the peptidase C2 family. In terms of assembly, forms a heterodimer with a small (regulatory) subunit CAPNS1. It depends on Ca(2+) as a cofactor. Undergoes calcium-induced successive autoproteolytic cleavages that generate a membrane-bound 78 kDa active form and an intracellular 75 kDa active form. Calpastatin reduces with high efficiency the transition from 78 kDa to 75 kDa calpain forms.

It localises to the cytoplasm. It is found in the cell membrane. The enzyme catalyses Broad endopeptidase specificity.. Its activity is regulated as follows. Activated by micromolar concentrations of calcium and inhibited by calpastatin. Calcium-regulated non-lysosomal thiol-protease which catalyzes limited proteolysis of substrates involved in cytoskeletal remodeling and signal transduction. Proteolytically cleaves CTBP1. Cleaves and activates caspase-7 (CASP7). This Pongo abelii (Sumatran orangutan) protein is Calpain-1 catalytic subunit.